We begin with the raw amino-acid sequence, 150 residues long: Deoxyuridine 5'-triphosphate nucleotidohydrolase (150 aa).

Substrate contacts are provided by residues 69–71, N82, and 86–88; these read RSG and LID.

It belongs to the dUTPase family. The cofactor is Mg(2+).

It catalyses the reaction dUTP + H2O = dUMP + diphosphate + H(+). The protein operates within pyrimidine metabolism; dUMP biosynthesis; dUMP from dCTP (dUTP route): step 2/2. This enzyme is involved in nucleotide metabolism: it produces dUMP, the immediate precursor of thymidine nucleotides and it decreases the intracellular concentration of dUTP so that uracil cannot be incorporated into DNA. The polypeptide is Deoxyuridine 5'-triphosphate nucleotidohydrolase (Methylobacillus flagellatus (strain ATCC 51484 / DSM 6875 / VKM B-1610 / KT)).